The sequence spans 119 residues: NADH dehydrogenase [ubiquinone] 1 subunit C2 (119 aa).

A helical membrane pass occupies residues 56–75; it reads GLHRQLLYITAFFFAGYYLV.

This sequence belongs to the complex I NDUFC2 subunit family. In terms of assembly, complex I is composed of 45 different subunits. Interacts with TMEM242.

Its subcellular location is the mitochondrion inner membrane. In terms of biological role, accessory subunit of the mitochondrial membrane respiratory chain NADH dehydrogenase (Complex I), that is believed not to be involved in catalysis but required for the complex assembly. Complex I functions in the transfer of electrons from NADH to the respiratory chain. The immediate electron acceptor for the enzyme is believed to be ubiquinone. This is NADH dehydrogenase [ubiquinone] 1 subunit C2 from Pan troglodytes (Chimpanzee).